The primary structure comprises 456 residues: Probable serine/threonine-protein kinase DDB_G0277449 (456 aa).

Residues 50–83 (STSPTECEESSSSTITTPSEESLSSGEESSSISD) show a composition bias toward low complexity. The interval 50 to 84 (STSPTECEESSSSTITTPSEESLSSGEESSSISDS) is disordered. One can recognise a Protein kinase domain in the interval 128-383 (FIIKHLVGKG…AIEIKRHPFF (256 aa)). ATP contacts are provided by residues 134–142 (VGKGGFGKV) and lysine 157. Aspartate 251 functions as the Proton acceptor in the catalytic mechanism. The region spanning 384-455 (KSIQWRKIEN…VRTPVLLESQ (72 aa)) is the AGC-kinase C-terminal domain.

The protein belongs to the protein kinase superfamily. AGC Ser/Thr protein kinase family.

The enzyme catalyses L-seryl-[protein] + ATP = O-phospho-L-seryl-[protein] + ADP + H(+). It catalyses the reaction L-threonyl-[protein] + ATP = O-phospho-L-threonyl-[protein] + ADP + H(+). The polypeptide is Probable serine/threonine-protein kinase DDB_G0277449 (Dictyostelium discoideum (Social amoeba)).